Consider the following 426-residue polypeptide: CAAX prenyl protease 1 homolog (426 aa).

Residues 1–3 lie on the Lumenal side of the membrane; that stretch reads MVN. The helical transmembrane segment at 4 to 24 threads the bilayer; that stretch reads YFIISISFFLLEHFYSFYLNF. Over 25 to 70 the chain is Cytoplasmic; the sequence is RQSKLLKNLTKVPEYCKDRITQEDFKKSQEYSKAKLDYKTLTSTIQ. A helical membrane pass occupies residues 71–91; sequence VLTTLLSFYYPVYPYFWNLSL. Topologically, residues 92–106 are lumenal; the sequence is ELAEKIGYPNEIIRS. Residues 107 to 127 form a helical membrane-spanning segment; it reads CFFFAFTVGVSVITEIPFSYY. Over 128 to 150 the chain is Cytoplasmic; it reads YQFILEEKFGYNRMTRTLFIKDK. A helical transmembrane segment spans residues 151-171; sequence IISTLLMIGFGLPILSLAIFI. The Lumenal segment spans residues 172–178; it reads INWSGPQ. The chain crosses the membrane as a helical span at residues 179-199; it reads LWFYCWLLLVAITLLSITIYP. Residues 200-294 lie on the Cytoplasmic side of the membrane; sequence TFIQPLFNKF…GHYKMSHTLK (95 aa). His282 serves as a coordination point for Zn(2+). Glu283 is a catalytic residue. Position 286 (His286) interacts with Zn(2+). A helical membrane pass occupies residues 295 to 315; sequence QMLLVQVHLVTLLYAFSLLIN. Topologically, residues 316 to 333 are lumenal; that stretch reads DDQLYQQFGFVSSKDSVL. A helical membrane pass occupies residues 334–354; the sequence is VGLTLFMFLYSPIDRIFSLLI. Over 355–426 the chain is Cytoplasmic; that stretch reads NIFSRKYEFQ…KVALYKLKNK (72 aa). Glu362 is a Zn(2+) binding site.

Belongs to the peptidase M48B family. The cofactor is Zn(2+).

The protein localises to the endoplasmic reticulum membrane. It carries out the reaction Hydrolyzes the peptide bond -P2-(S-farnesyl or geranylgeranyl)C-P1'-P2'-P3'-COOH where P1' and P2' are amino acids with aliphatic side chains and P3' is any C-terminal residue.. In terms of biological role, proteolytically removes the C-terminal three residues of farnesylated proteins. In Dictyostelium discoideum (Social amoeba), this protein is CAAX prenyl protease 1 homolog (zmpste24).